The sequence spans 654 residues: Sucrose:sucrose 1-fructosyltransferase (654 aa).

A propeptide spanning residues 1–106 (MESSAVVPGT…VSEKASGAYS (106 aa)) is cleaved from the precursor. A glycan (N-linked (GlcNAc...) asparagine) is linked at Asn32. The active site involves Asp136. Residues Asn328, Asn457, Asn491, Asn506, and Asn625 are each glycosylated (N-linked (GlcNAc...) asparagine).

The protein belongs to the glycosyl hydrolase 32 family. In terms of assembly, monomer. Accumulates at the base of growing leaves.

The protein localises to the vacuole. The catalysed reaction is 2 sucrose = 1(F)-beta-D-fructosylsucrose + D-glucose. Its function is as follows. Transferase involved in fructan biosynthesis that catalyzes the production of 1-kestose (fructose and nystose to a lower extent) from sucrose. Also exhibits some hydrolase activity toward 1-kestose, thus producing fructose and sucrose. A weak fructosyltransferase activity leads to the formation of nystose from 1-kestose. This chain is Sucrose:sucrose 1-fructosyltransferase (1-SST), found in Festuca arundinacea (Tall fescue).